A 102-amino-acid chain; its full sequence is Large ribosomal subunit protein uL23c (102 aa).

This sequence belongs to the universal ribosomal protein uL23 family. In terms of assembly, part of the 50S ribosomal subunit.

It is found in the plastid. It localises to the chloroplast. Binds to 23S rRNA. The chain is Large ribosomal subunit protein uL23c (rpl23) from Phaeodactylum tricornutum (strain CCAP 1055/1).